The chain runs to 491 residues: UDP-N-acetylmuramate--L-alanine ligase (491 aa).

126-132 (GTHGKTT) contributes to the ATP binding site.

The protein belongs to the MurCDEF family.

The protein localises to the cytoplasm. The enzyme catalyses UDP-N-acetyl-alpha-D-muramate + L-alanine + ATP = UDP-N-acetyl-alpha-D-muramoyl-L-alanine + ADP + phosphate + H(+). It participates in cell wall biogenesis; peptidoglycan biosynthesis. Its function is as follows. Cell wall formation. The polypeptide is UDP-N-acetylmuramate--L-alanine ligase (Klebsiella pneumoniae subsp. pneumoniae (strain ATCC 700721 / MGH 78578)).